Reading from the N-terminus, the 323-residue chain is Elongation factor P--(R)-beta-lysine ligase (323 aa).

76–78 (SPE) contacts substrate. ATP-binding positions include 100-102 (RNE) and N109. Substrate is bound at residue Y118. 242 to 243 (EL) contacts ATP. Residue E249 participates in substrate binding. G298 provides a ligand contact to ATP.

It belongs to the class-II aminoacyl-tRNA synthetase family. EpmA subfamily. In terms of assembly, homodimer.

The catalysed reaction is D-beta-lysine + L-lysyl-[protein] + ATP = N(6)-((3R)-3,6-diaminohexanoyl)-L-lysyl-[protein] + AMP + diphosphate + H(+). Functionally, with EpmB is involved in the beta-lysylation step of the post-translational modification of translation elongation factor P (EF-P). Catalyzes the ATP-dependent activation of (R)-beta-lysine produced by EpmB, forming a lysyl-adenylate, from which the beta-lysyl moiety is then transferred to the epsilon-amino group of a conserved specific lysine residue in EF-P. In Actinobacillus succinogenes (strain ATCC 55618 / DSM 22257 / CCUG 43843 / 130Z), this protein is Elongation factor P--(R)-beta-lysine ligase.